Reading from the N-terminus, the 181-residue chain is Small ribosomal subunit protein bS16 (181 aa).

A disordered region spans residues 150–181 (KKAAEEAAKAAAEAPAEEAAPAEETATEAAAE). The span at 158–181 (KAAAEAPAEEAAPAEETATEAAAE) shows a compositional bias: low complexity.

It belongs to the bacterial ribosomal protein bS16 family.

The sequence is that of Small ribosomal subunit protein bS16 from Bacteroides fragilis (strain YCH46).